The chain runs to 440 residues: Guanine/hypoxanthine permease PbuG (440 aa).

13 consecutive transmembrane segments (helical) span residues 18–38 (IIGG…NPIT), 57–77 (AVFT…GLIA), 81–101 (IAIA…VLGM), 107–127 (AALS…LTGF), 142–162 (AVGA…SGII), 175–195 (IHSG…ILMV), 201–221 (GVFI…LVPV), 251–271 (MLIV…GTLV), 291–311 (ALLA…STTT), 327–347 (GFAA…SPLL), 354–374 (VTAP…GKIA), 388–408 (MIMM…FIFY), and 419–439 (KEVH…FIFL).

This sequence belongs to the nucleobase:cation symporter-2 (NCS2) (TC 2.A.40) family. Azg-like subfamily.

Its subcellular location is the cell membrane. In terms of biological role, involved in the uptake of the purine bases hypoxanthine and guanine. In Bacillus subtilis (strain 168), this protein is Guanine/hypoxanthine permease PbuG (pbuG).